The primary structure comprises 725 residues: Golgin candidate 4 (725 aa).

The interval 17 to 62 (HDVHDDDEDDDEDLTIYGSTNGGTDRRNSNGFRYSRSPMANGFESP) is disordered. Over residues 21–30 (DDDEDDDEDL) the composition is skewed to acidic residues. The stretch at 66–132 (EIERYKAEIN…LKESRLDLSR (67 aa)) forms a coiled coil. Disordered stretches follow at residues 134 to 183 (SNNN…SHKK), 191 to 210 (LEERTRSMASAQARELEKER), and 311 to 349 (ASQKSTSRKLFPKSTEDLSRHLSSLDEEKAGTFPGKEDM). The span at 148 to 175 (NRSQRSPTNWKNRNQMNNGIASKPNGTE) shows a compositional bias: polar residues. Coiled coils occupy residues 191-316 (LEER…QKST), 344-407 (PGKE…QTNE), and 437-563 (EIRK…LNRM). Residues 324–349 (STEDLSRHLSSLDEEKAGTFPGKEDM) are compositionally biased toward basic and acidic residues. Residues 562–613 (RMSMDSDFLVDRRIVIKLLVTYFQRNHSREVLDLMVRMLGFSEEEKQRIGLA) form the GRIP domain. The segment covering 672–688 (ERERREAEDAANKEQEK) has biased composition (basic and acidic residues). Residues 672-725 (ERERREAEDAANKEQEKATVSSTQRPKYEQSDSEFSTVPLTSSNSNHRLSRLLT) are disordered. The span at 711 to 725 (LTSSNSNHRLSRLLT) shows a compositional bias: low complexity.

Its subcellular location is the golgi apparatus. Functionally, golgi matrix protein playing a role in tethering of vesicles to Golgi membranes and in maintaining the overall structure of the Golgi apparatus. This chain is Golgin candidate 4 (GC4), found in Arabidopsis thaliana (Mouse-ear cress).